The primary structure comprises 390 residues: Aspergillopepsin-1 (390 aa).

The first 19 residues, 1 to 19 (MVNTSLLAALTAYAVAVAA), serve as a signal peptide directing secretion. The propeptide at 20–67 (APTAPQVKGFSVNQVAVPKGVYRHPAAQLAKAYGKYHATVPTQVAAAA) is activation peptide. The 304-residue stretch at 84-387 (YITQVTVGDD…DASGPRLGFA (304 aa)) folds into the Peptidase A1 domain. Catalysis depends on residues Asp-100 and Asp-281.

The protein belongs to the peptidase A1 family. As to quaternary structure, monomer.

The protein localises to the secreted. It carries out the reaction Hydrolysis of proteins with broad specificity. Generally favors hydrophobic residues in P1 and P1', but also accepts Lys in P1, which leads to activation of trypsinogen. Does not clot milk.. Its activity is regulated as follows. Inhibited by the microbial peptide pepstatin A. Secreted aspartic endopeptidase that allows assimilation of proteinaceous substrates. The scissile peptide bond is attacked by a nucleophilic water molecule activated by two aspartic residues in the active site. Shows a broad primary substrate specificity. Favors hydrophobic residues at the P1 and P1' positions, but also accepts a lysine residue in the P1 position, leading to the activation of trypsinogen and chymotrypsinogen A. Hydrolyzes myoglobin, hemoglobin and other natural proteins. Hydrolyzes equine myoglobin between positions 'Met-1' and 'Gly-2', 'Lys-43' and 'Phe-44', and 'Leu-70' and 'Thr-71'. The polypeptide is Aspergillopepsin-1 (pepA) (Aspergillus pseudoglaucus (Eurotium repens)).